A 286-amino-acid chain; its full sequence is 4-diphosphocytidyl-2-C-methyl-D-erythritol kinase (286 aa).

The active site involves lysine 11. An ATP-binding site is contributed by 94–104; sequence PMGGGIGGGSS. Aspartate 136 is a catalytic residue.

The protein belongs to the GHMP kinase family. IspE subfamily.

The enzyme catalyses 4-CDP-2-C-methyl-D-erythritol + ATP = 4-CDP-2-C-methyl-D-erythritol 2-phosphate + ADP + H(+). It functions in the pathway isoprenoid biosynthesis; isopentenyl diphosphate biosynthesis via DXP pathway; isopentenyl diphosphate from 1-deoxy-D-xylulose 5-phosphate: step 3/6. In terms of biological role, catalyzes the phosphorylation of the position 2 hydroxy group of 4-diphosphocytidyl-2C-methyl-D-erythritol. The chain is 4-diphosphocytidyl-2-C-methyl-D-erythritol kinase from Pseudomonas putida (strain ATCC 47054 / DSM 6125 / CFBP 8728 / NCIMB 11950 / KT2440).